Consider the following 659-residue polypeptide: MVKRRLSAFGNAFLIYFIIFRLCCCSPQTSHWCKYPALCLKSPDTHNENLVCDAYLSVIATKSEEKEASNPTTWDFTPTNKYQEPSFHTKTSLNGSDTISSNFLSKYEYSNGTSTSEFIDSISPPLVNETSTISSSKKLEQNYSVTEVIDTNIITSSSVTLPISEDGSSTSAAATIDSNIDEKTVAFSEEKRFNFASTDCAAAVIKTNPEAVGSSSILTENKDKYMLNKCSAENKFVVIELCEDIYVDTVQIANFEFFSSIFRDFKVSVSGKYPKYESSWMELGTFTALNLRTLQSFHIENPLIWAKYLKIEFLTHYGSEFYCPVSLLRVYGKTMIEEFEEANEDFLEQKVNDGSAIKADEIRKPQESPIFVDEEDTDVQSKPVRKNPSVELNSTDTLLSSTVISKSLSTVVIGNETGKSESYPATSTRSFNDISPSSSSSYSTAQISTFPSNQESIYKNINKRLSTLEERKKAFDEIVEKILTNYGKHNAKNMNFTQLLHELNSTLQLEISKLSKSVVKPSLFALQAKLELLSAENEYFQSQITSLYQESSFQKRLLMLQLTVLIVLTVYMAVSRLPENLPTTRSSSNNPIEASRPPFSRDEQDISKANDFRVSASSAVYTVGPELLQRKKRDPNTSIRSIHEREQDKIIHSRSHSVC.

Positions Met1 to Cys25 are cleaved as a signal peptide. Topologically, residues Ser26–Arg556 are lumenal. Asn94, Asn111, Asn128, and Asn142 each carry an N-linked (GlcNAc...) asparagine glycan. An SUN domain is found at Ala173–Met335. Asn393 and Asn415 each carry an N-linked (GlcNAc...) asparagine glycan. The disordered stretch occupies residues Thr417–Ala445. The segment covering Tyr423–Ile434 has biased composition (polar residues). N-linked (GlcNAc...) asparagine glycosylation is found at Asn495 and Asn504. The chain crosses the membrane as a helical span at residues Leu557 to Val574. At Ser575–Cys659 the chain is on the cytoplasmic side. Disordered stretches follow at residues Asn580–Glu603 and Lys632–Cys659. Polar residues predominate over residues Leu581–Ile592. Residues Ser641–Ile651 are compositionally biased toward basic and acidic residues.

This sequence belongs to the SLP1 family. Interacts with EMP65.

The protein localises to the endoplasmic reticulum membrane. In terms of biological role, may be involved in membrane protein folding. This is an uncharacterized protein from Schizosaccharomyces pombe (strain 972 / ATCC 24843) (Fission yeast).